The following is a 513-amino-acid chain: Alpha-amylase mde5 (513 aa).

The N-terminal stretch at 1–25 is a signal peptide; the sequence is MKHNEVFGWTLKVLSFLLVVIPANA. Cys-52 and Cys-60 are oxidised to a cystine. Residue Trp-105 coordinates substrate. Position 143 (Asn-143) interacts with Ca(2+). Residue His-144 coordinates substrate. An N-linked (GlcNAc...) asparagine glycan is attached at Asn-162. Residues Cys-171 and Cys-184 are joined by a disulfide bond. The Ca(2+) site is built by Glu-182 and Asp-195. Arg-224 provides a ligand contact to substrate. Asp-226, His-230, and Glu-250 together coordinate Ca(2+). The Nucleophile role is filled by Asp-226. 229–230 lines the substrate pocket; it reads KH. The active-site Proton donor is the Glu-250. Gly-254 is a substrate binding site. The cysteines at positions 260 and 304 are disulfide-linked. Asp-318 contacts substrate. The N-linked (GlcNAc...) asparagine glycan is linked to Asn-357. Arg-365 serves as a coordination point for substrate. A disulfide bridge connects residues Cys-454 and Cys-488.

The protein belongs to the glycosyl hydrolase 13 family. Ca(2+) is required as a cofactor.

It localises to the endoplasmic reticulum. It catalyses the reaction Endohydrolysis of (1-&gt;4)-alpha-D-glucosidic linkages in polysaccharides containing three or more (1-&gt;4)-alpha-linked D-glucose units.. The polypeptide is Alpha-amylase mde5 (mde5) (Schizosaccharomyces pombe (strain 972 / ATCC 24843) (Fission yeast)).